Reading from the N-terminus, the 398-residue chain is RNA-binding protein rnc1 (398 aa).

Positions 40–78 (KVSIPTPKPSTPLSTLTNGSTIQQSMTNQPEPTSQVPPI) are disordered. Thr50 is modified (phosphothreonine). The segment covering 57 to 76 (NGSTIQQSMTNQPEPTSQVP) has biased composition (polar residues). KH domains follow at residues 93–157 (QLTL…YRFI) and 178–243 (PRKL…IWEI). Low complexity predominate over residues 274 to 290 (ASTASPQQVSPPAAPST). The tract at residues 274 to 295 (ASTASPQQVSPPAAPSTTSGEA) is disordered. Residues 320-385 (KVTQNISIPA…EENEKALFLL (66 aa)) form the KH 3 domain.

In terms of processing, phosphorylated by pmk1. Phosphorylation causes enhancement of the RNA-binding activity.

Its subcellular location is the cytoplasm. Binds and stabilizes pmp1 mRNA and hence acts as a negative regulator of pmk1 signaling. Overexpression suppresses the Cl(-) sensitivity of calcineurin deletion. This Schizosaccharomyces pombe (strain 972 / ATCC 24843) (Fission yeast) protein is RNA-binding protein rnc1.